Consider the following 324-residue polypeptide: ATP-dependent 6-phosphofructokinase (324 aa).

Gly11 serves as a coordination point for ATP. Arg21–Arg25 contacts ADP. ATP contacts are provided by residues Arg72–Glu73 and Gly102–Ser105. A Mg(2+)-binding site is contributed by Asn103. Thr126–Asp128 provides a ligand contact to substrate. Catalysis depends on Asp128, which acts as the Proton acceptor. Arg155 contributes to the ADP binding site. Residues Arg163 and Met170–Arg172 each bind substrate. Residues Gly186–Asp188, Arg212, and Lys214–Phe216 each bind ADP. Residues Glu223, Arg248, and Tyr254 to Arg257 contribute to the substrate site.

This sequence belongs to the phosphofructokinase type A (PFKA) family. ATP-dependent PFK group I subfamily. Prokaryotic clade 'B1' sub-subfamily. Homotetramer. Mg(2+) serves as cofactor.

Its subcellular location is the cytoplasm. The enzyme catalyses beta-D-fructose 6-phosphate + ATP = beta-D-fructose 1,6-bisphosphate + ADP + H(+). The protein operates within carbohydrate degradation; glycolysis; D-glyceraldehyde 3-phosphate and glycerone phosphate from D-glucose: step 3/4. Allosterically activated by ADP and other diphosphonucleosides, and allosterically inhibited by phosphoenolpyruvate. Catalyzes the phosphorylation of D-fructose 6-phosphate to fructose 1,6-bisphosphate by ATP, the first committing step of glycolysis. The sequence is that of ATP-dependent 6-phosphofructokinase from Persephonella marina (strain DSM 14350 / EX-H1).